Reading from the N-terminus, the 83-residue chain is Protein CASPARIAN STRIP INTEGRITY FACTOR 2 (83 aa).

The N-terminal stretch at 1–28 (MGLLPLVKKLGFIIFLLVSASAFALCSA) is a signal peptide. A disordered region spans residues 61–83 (SRDYGHSSPKPKLVRPPFKLIPN). Position 64 is a sulfotyrosine (Y64). Hydroxyproline is present on residues P69 and P71.

As to quaternary structure, interacts with the specific receptor kinases GSO1 and GSO2. In terms of tissue distribution, expressed exclusively in the root stele.

Functionally, peptide hormone required for contiguous Casparian strip diffusion barrier formation in roots via the regulation of CASPs protein expression and distribution in a GSO1-GSO2 signaling pathway. The Casparian strip is required for ion homeostasis (e.g. iron and potassium ions). The polypeptide is Protein CASPARIAN STRIP INTEGRITY FACTOR 2 (Arabidopsis thaliana (Mouse-ear cress)).